Reading from the N-terminus, the 429-residue chain is Glutamate-1-semialdehyde 2,1-aminomutase (429 aa).

Lys265 bears the N6-(pyridoxal phosphate)lysine mark.

The protein belongs to the class-III pyridoxal-phosphate-dependent aminotransferase family. HemL subfamily. As to quaternary structure, homodimer. Pyridoxal 5'-phosphate is required as a cofactor.

It is found in the cytoplasm. It catalyses the reaction (S)-4-amino-5-oxopentanoate = 5-aminolevulinate. It participates in porphyrin-containing compound metabolism; protoporphyrin-IX biosynthesis; 5-aminolevulinate from L-glutamyl-tRNA(Glu): step 2/2. The polypeptide is Glutamate-1-semialdehyde 2,1-aminomutase (Legionella pneumophila (strain Corby)).